The primary structure comprises 317 residues: Porphobilinogen deaminase (317 aa).

The residue at position 242 (C242) is an S-(dipyrrolylmethanemethyl)cysteine.

The protein belongs to the HMBS family. In terms of assembly, monomer. The cofactor is dipyrromethane.

The catalysed reaction is 4 porphobilinogen + H2O = hydroxymethylbilane + 4 NH4(+). It functions in the pathway porphyrin-containing compound metabolism; protoporphyrin-IX biosynthesis; coproporphyrinogen-III from 5-aminolevulinate: step 2/4. Functionally, tetrapolymerization of the monopyrrole PBG into the hydroxymethylbilane pre-uroporphyrinogen in several discrete steps. In Colwellia psychrerythraea (strain 34H / ATCC BAA-681) (Vibrio psychroerythus), this protein is Porphobilinogen deaminase.